The primary structure comprises 249 residues: MSLDQPAHRRPRVAAAVLAGGVGSRMGSAHPKQLLRLAGQTILERSVAALCAAPEVDEVVVVMNAAHLAEAEKILAEGRYDKVSRIVPGGASRSESSLAALQAVDDYDDNDLLLLHDAARPLVSGRTITACVTELTEVGAVGVAVPSSDTVVQVTLDASGREVIAAVPDRAALRRMQTPQGFRLGVIRRAYARAFAEPGFTATDDCGVVLRYLPEEPVRIVTGEESNIKVTHPSDLAVAEALLRTGVAQ.

It belongs to the IspD/TarI cytidylyltransferase family. IspD subfamily.

The catalysed reaction is 2-C-methyl-D-erythritol 4-phosphate + CTP + H(+) = 4-CDP-2-C-methyl-D-erythritol + diphosphate. It participates in isoprenoid biosynthesis; isopentenyl diphosphate biosynthesis via DXP pathway; isopentenyl diphosphate from 1-deoxy-D-xylulose 5-phosphate: step 2/6. Its function is as follows. Catalyzes the formation of 4-diphosphocytidyl-2-C-methyl-D-erythritol from CTP and 2-C-methyl-D-erythritol 4-phosphate (MEP). This is 2-C-methyl-D-erythritol 4-phosphate cytidylyltransferase from Thermobifida fusca (strain YX).